We begin with the raw amino-acid sequence, 578 residues long: Phosphoenolpyruvate-protein phosphotransferase (578 aa).

The active-site Tele-phosphohistidine intermediate is histidine 195. Residues arginine 302 and arginine 338 each contribute to the phosphoenolpyruvate site. The Mg(2+) site is built by glutamate 437 and aspartate 461. Residues 460–461 and arginine 471 contribute to the phosphoenolpyruvate site; that span reads ND. Cysteine 508 functions as the Proton donor in the catalytic mechanism.

It belongs to the PEP-utilizing enzyme family. As to quaternary structure, homodimer. Mg(2+) serves as cofactor.

Its subcellular location is the cytoplasm. The catalysed reaction is L-histidyl-[protein] + phosphoenolpyruvate = N(pros)-phospho-L-histidyl-[protein] + pyruvate. In terms of biological role, general (non sugar-specific) component of the phosphoenolpyruvate-dependent sugar phosphotransferase system (sugar PTS). This major carbohydrate active-transport system catalyzes the phosphorylation of incoming sugar substrates concomitantly with their translocation across the cell membrane. Enzyme I transfers the phosphoryl group from phosphoenolpyruvate (PEP) to the phosphoryl carrier protein (HPr). The polypeptide is Phosphoenolpyruvate-protein phosphotransferase (ptsI) (Bacillus sp. (strain S)).